The primary structure comprises 232 residues: MKIGIIGAMEEEVTLLRDKIEKRQTISLGGCEIYTGQLNGTEVALLKSGIGKVAAALGATLLLEHCKPDVIINTGSAGGLAPTLKVGDIVVSDEARYHDADVTAFGYEYGQLPGCPAGFKADDKLIAAAEACIAELNLNAVRGLIVSGDAFINGSVGLAKIRHNFPQAIAVEMEATAIAHVCHNFNVPFVVVRAISDVADQQSHLSFDEFLAVAAKQSSLMVESLVQKLAHG.

Glutamate 12 functions as the Proton acceptor in the catalytic mechanism. Substrate contacts are provided by residues glycine 78, isoleucine 152, and 173 to 174 (ME). Aspartate 197 serves as the catalytic Proton donor.

It belongs to the PNP/UDP phosphorylase family. MtnN subfamily. As to quaternary structure, homodimer.

The catalysed reaction is S-adenosyl-L-homocysteine + H2O = S-(5-deoxy-D-ribos-5-yl)-L-homocysteine + adenine. It carries out the reaction S-methyl-5'-thioadenosine + H2O = 5-(methylsulfanyl)-D-ribose + adenine. It catalyses the reaction 5'-deoxyadenosine + H2O = 5-deoxy-D-ribose + adenine. It participates in amino-acid biosynthesis; L-methionine biosynthesis via salvage pathway; S-methyl-5-thio-alpha-D-ribose 1-phosphate from S-methyl-5'-thioadenosine (hydrolase route): step 1/2. Catalyzes the irreversible cleavage of the glycosidic bond in both 5'-methylthioadenosine (MTA) and S-adenosylhomocysteine (SAH/AdoHcy) to adenine and the corresponding thioribose, 5'-methylthioribose and S-ribosylhomocysteine, respectively. Also cleaves 5'-deoxyadenosine, a toxic by-product of radical S-adenosylmethionine (SAM) enzymes, into 5-deoxyribose and adenine. Thus, is required for in vivo function of the radical SAM enzymes biotin synthase and lipoic acid synthase, that are inhibited by 5'-deoxyadenosine accumulation. The protein is 5'-methylthioadenosine/S-adenosylhomocysteine nucleosidase of Escherichia coli O9:H4 (strain HS).